The sequence spans 308 residues: Aspartate carbamoyltransferase catalytic subunit (308 aa).

Arginine 55 and threonine 56 together coordinate carbamoyl phosphate. Residue lysine 83 coordinates L-aspartate. Carbamoyl phosphate-binding residues include arginine 105, histidine 133, and glutamine 136. 2 residues coordinate L-aspartate: arginine 166 and arginine 220. Carbamoyl phosphate contacts are provided by glycine 261 and proline 262.

This sequence belongs to the aspartate/ornithine carbamoyltransferase superfamily. ATCase family. Heterododecamer (2C3:3R2) of six catalytic PyrB chains organized as two trimers (C3), and six regulatory PyrI chains organized as three dimers (R2).

The catalysed reaction is carbamoyl phosphate + L-aspartate = N-carbamoyl-L-aspartate + phosphate + H(+). It participates in pyrimidine metabolism; UMP biosynthesis via de novo pathway; (S)-dihydroorotate from bicarbonate: step 2/3. Catalyzes the condensation of carbamoyl phosphate and aspartate to form carbamoyl aspartate and inorganic phosphate, the committed step in the de novo pyrimidine nucleotide biosynthesis pathway. The chain is Aspartate carbamoyltransferase catalytic subunit from Chlorobium limicola (strain DSM 245 / NBRC 103803 / 6330).